The following is a 152-amino-acid chain: MNPAHLLVLLAVCVSLLGASAIPPLPLNLVQFSNMIKCTIPGSRPLLDYADYGCYCGAGGSGTPVDESDRCCQTHDNCYSQAKKHPACKSPLDSPYIKIYSYTCSGGSLTCRDDNDECGAFICNCDRTAAICFAGAPYNKENYNIDTKKHCK.

Residues 1-21 form the signal peptide; the sequence is MNPAHLLVLLAVCVSLLGASA. The propeptide occupies 22-27; it reads IPPLPL. 7 cysteine pairs are disulfide-bonded: C38–C104, C54–C151, C56–C72, C71–C132, C78–C125, C88–C118, and C111–C123. Ca(2+) contacts are provided by Y55, G57, and G59. H75 is a catalytic residue. D76 lines the Ca(2+) pocket. The active site involves D126.

The protein belongs to the phospholipase A2 family. Group I subfamily. Ca(2+) is required as a cofactor.

The protein localises to the secreted. It carries out the reaction a 1,2-diacyl-sn-glycero-3-phosphocholine + H2O = a 1-acyl-sn-glycero-3-phosphocholine + a fatty acid + H(+). PA2 catalyzes the calcium-dependent hydrolysis of the 2-acyl groups in 3-sn-phosphoglycerides. The polypeptide is Phospholipase A2 pkP2 (Laticauda semifasciata (Black-banded sea krait)).